A 447-amino-acid polypeptide reads, in one-letter code: Rab GDP dissociation inhibitor alpha (447 aa).

Serine 427 is modified (phosphoserine).

Belongs to the Rab GDI family. In terms of assembly, interacts with RHOH. Interacts with the non-phosphorylated forms of RAB1A, RAB3A, RAB5A, RAB5B, RAB5C, RAB8A, RAB8B, RAB12, RAB35, and RAB43. Interacts with RAB10. As to expression, high expression in brain, lower in other tissues.

It localises to the cytoplasm. Its subcellular location is the golgi apparatus. The protein localises to the trans-Golgi network. Its function is as follows. Regulates the GDP/GTP exchange reaction of most Rab proteins by inhibiting the dissociation of GDP from them, and the subsequent binding of GTP to them. Promotes the dissociation of GDP-bound Rab proteins from the membrane and inhibits their activation. Promotes the dissociation of RAB1A, RAB3A, RAB5A and RAB10 from membranes. This Mus musculus (Mouse) protein is Rab GDP dissociation inhibitor alpha (Gdi1).